The primary structure comprises 440 residues: 23S rRNA (uracil(1939)-C(5))-methyltransferase RlmD (440 aa).

The region spanning 11–69 (STLDTKHQPVTIERLDHQGSGLAFLHKKPLFVDGALPGEEVLIQLTENKSKYARGQLIK) is the TRAM domain. [4Fe-4S] cluster contacts are provided by Cys82, Cys88, Cys91, and Cys169. 6 residues coordinate S-adenosyl-L-methionine: Gln272, Phe301, Asn306, Glu322, Asn349, and Asp370. The active-site Nucleophile is the Cys396.

This sequence belongs to the class I-like SAM-binding methyltransferase superfamily. RNA M5U methyltransferase family. RlmD subfamily.

It carries out the reaction uridine(1939) in 23S rRNA + S-adenosyl-L-methionine = 5-methyluridine(1939) in 23S rRNA + S-adenosyl-L-homocysteine + H(+). In terms of biological role, catalyzes the formation of 5-methyl-uridine at position 1939 (m5U1939) in 23S rRNA. This Vibrio cholerae serotype O1 (strain M66-2) protein is 23S rRNA (uracil(1939)-C(5))-methyltransferase RlmD.